The chain runs to 475 residues: Bifunctional aspartate aminotransferase and glutamate/aspartate-prephenate aminotransferase (475 aa).

A chloroplast-targeting transit peptide spans 1 to 55; the sequence is MASQSSVAVISSAAARGESFPDSKKPIGSVRFQQPLRLSFSYCKSGNMSSRICAM. Glycine 107, tryptophan 193, and asparagine 243 together coordinate L-aspartate. Position 306 is an N6-(pyridoxal phosphate)lysine (lysine 306). Arginine 445 lines the L-aspartate pocket.

It belongs to the class-I pyridoxal-phosphate-dependent aminotransferase family. Homodimer. Pyridoxal 5'-phosphate is required as a cofactor.

Its subcellular location is the plastid. The protein resides in the chloroplast. The catalysed reaction is L-aspartate + 2-oxoglutarate = oxaloacetate + L-glutamate. It catalyses the reaction L-arogenate + oxaloacetate = prephenate + L-aspartate. The enzyme catalyses L-arogenate + 2-oxoglutarate = prephenate + L-glutamate. The protein operates within amino-acid biosynthesis; L-phenylalanine biosynthesis; L-arogenate from prephenate (L-Asp route): step 1/1. It functions in the pathway amino-acid biosynthesis; L-phenylalanine biosynthesis; L-arogenate from prephenate (L-Glu route): step 1/1. Functionally, prokaryotic-type aspartate aminotransferase. Also has a prenate transaminase activity. Involved in the aromatic amino acids biosynthesis pathway via the arogenate route. Required for the transamination of prephenate into arogenate. Required for early development of the embryo. The polypeptide is Bifunctional aspartate aminotransferase and glutamate/aspartate-prephenate aminotransferase (PAT) (Arabidopsis thaliana (Mouse-ear cress)).